Reading from the N-terminus, the 1139-residue chain is Solute carrier family 12 member 5 (1139 aa).

Disordered regions lie at residues 1–62 (MSRR…KGRE) and 95–116 (PQGS…KPVQ). The Cytoplasmic segment spans residues 1-98 (MSRRFTVTSL…ANYTNLPQGS (98 aa)). Residues 21 to 45 (PESRRHSVADPRRLPREDVKGDGNP) show a composition bias toward basic and acidic residues. The span at 46-55 (KESSPFINST) shows a compositional bias: polar residues. Threonine 57 carries the phosphothreonine modification. Residues 98 to 111 (SKEHEEAENNEGGK) show a composition bias toward basic and acidic residues. The discontinuously helical transmembrane segment at 99 to 120 (KEHEEAENNEGGKKKPVQAPRM) threads the bilayer. Residue lysine 113 participates in K(+) binding. At 121 to 129 (GTFMGVYLP) the chain is on the extracellular side. A helical membrane pass occupies residues 130–151 (CLQNIFGVILFLRLTWVVGIAG). The Cytoplasmic segment spans residues 152-174 (IMESFCMVFICCSCTMLTAISMS). The helical transmembrane segment at 175-203 (AIATNGVVPAGGSYYMISRSLGPEFGGAV) threads the bilayer. Alanine 184 is a binding site for chloride. Residues 204 to 229 (GLCFYLGTTFAGAMYILGTIEILLAY) are Extracellular-facing. Helical transmembrane passes span 230–250 (LFPA…AAML) and 251–276 (NNMR…KYVN). Residues 277–402 (KFALVFLGCV…ERRGMPSVGL (126 aa)) are Extracellular-facing. An intrachain disulfide couples cysteine 310 to cysteine 325. Asparagine 314, asparagine 333, asparagine 351, and asparagine 362 each carry an N-linked (GlcNAc...) asparagine glycan. A disulfide bridge links cysteine 345 with cysteine 354. A helical membrane pass occupies residues 403 to 420 (ADGTPVDMDHPYVFSDMT). Methionine 410 contributes to the K(+) binding site. Tyrosine 414 and valine 415 together coordinate chloride. At 421–429 (SYFTLLVGI) the chain is on the cytoplasmic side. The chain crosses the membrane as a helical span at residues 430–453 (YFPSVTGIMAGSNRSGDLRDAQKS). Aspartate 446 contributes to the K(+) binding site. At 454-485 (IPTGTILAIATTSAVYISSVVLFGACIEGVVL) the chain is on the extracellular side. Residues 486-513 (RDKFGEAVNGNLVVGTLAWPSPWVIVIG) traverse the membrane as a helical segment. At 514 to 534 (SFFSTCGAGLQSLTGAPRLLQ) the chain is on the cytoplasmic side. Transmembrane regions (helical) follow at residues 535 to 555 (AISR…KANG) and 556 to 578 (EPTW…ASLD). Residue glutamate 569 coordinates chloride. Topologically, residues 579-592 (EVAPILSMFFLMCY) are cytoplasmic. A run of 2 helical transmembrane segments spans residues 593-615 (MFVN…PRFR) and 616-632 (YYHW…CLAL). At 633-1139 (MFICSWYYAL…GGREVITIYS (507 aa)) the chain is on the cytoplasmic side. Residues 667–681 (GIRGLSLSAARYALL) form a scissor helix region. Threonine 929 carries the phosphothreonine; by OXSR1 and STK39 modification. Residues 943-1025 (HLTKNERERE…PEGEGETDPE (83 aa)) form a disordered region. Over residues 945–962 (TKNEREREIQSITDESRG) the composition is skewed to basic and acidic residues. Residues 982–994 (TACDNEEKPEEEV) show a composition bias toward acidic residues. Positions 1003 to 1012 (PSCPSSSPSP) are enriched in low complexity. Threonine 1030 is modified (phosphothreonine; by OXSR1 and STK39). Positions 1033–1052 (KDKSAAQKNKGPSPVSSEGI) are disordered. Serine 1045, serine 1048, and serine 1049 each carry phosphoserine.

It belongs to the SLC12A transporter family. K/Cl co-transporter subfamily. As to quaternary structure, homodimer; adopts a domain-swap conformation at the scissor helices connecting the transmembrane domain and C-terminal domain. Heterodimer wHeterodimer with K-Cl cotransporters SLC12A6 and SLC12A7. Interacts with AP2A1. Phosphorylated at Thr-929 and Thr-1030 by OXSR1/OSR1 and STK39/SPAK downstream of WNK kinases (WNK1, WNK2, WNK3 or WNK4), inhibiting the potassium-chloride cotransport activity. In terms of tissue distribution, highly expressed in brain. Not detected in other tissues. Highly expressed in pyramidal neurons and in neurons throughout the cortex, hippocampus, the granular layer of the cerebellum and in groups of neurons throughout the brainstem. Barely detectable in dorsal-root ganglions.

Its subcellular location is the cell membrane. The protein localises to the cell projection. It is found in the dendrite. It catalyses the reaction K(+)(in) + chloride(in) = K(+)(out) + chloride(out). With respect to regulation, inhibited following phosphorylation by OXSR1/OSR1 and STK39/SPAK: phosphorylation takes place downstream of WNK kinases (WNK1, WNK2, WNK3 or WNK4) in response to hyperosmotic stress and subsequent cell shrinkage. In terms of biological role, mediates electroneutral potassium-chloride cotransport in mature neurons and is required for neuronal Cl(-) homeostasis. As major extruder of intracellular chloride, it establishes the low neuronal Cl(-) levels required for chloride influx after binding of GABA-A and glycine to their receptors, with subsequent hyperpolarization and neuronal inhibition. Involved in the regulation of dendritic spine formation and maturation. This chain is Solute carrier family 12 member 5 (Slc12a5), found in Rattus norvegicus (Rat).